The chain runs to 174 residues: Early E1A protein (174 aa).

The interval 40 to 48 is interaction with RB1 in competition with E2F1; it reads PSLHDLFDL. The LXCXE motif, interaction with host RB1 motif lies at 106–110; sequence LLCLE. Residues 145–163 fold into a zinc finger; sequence CLRCAYYQEQGENSICGLC.

It belongs to the adenoviridae E1A protein family. As to quaternary structure, interacts with host UBE2I; this interaction interferes with polySUMOylation. Interacts with host RB1; this interaction induces the aberrant dissociation of RB1-E2F1 complex thereby disrupting the activity of RB1 and activating E2F1-regulated genes. Interacts with host ATF7; the interaction enhances ATF7-mediated viral transactivation activity which requires the zinc binding domains of both proteins. Isoform early E1A 32 kDa protein and isoform early E1A 26 kDa protein interact (via N-terminus) with CUL1 and E3 ubiquitin ligase RBX1; these interactions inhibit RBX1-CUL1-dependent elongation reaction of ubiquitin chains and attenuate ubiquitination of SCF(FBXW7) target proteins. Interacts (via PXLXP motif) with host ZMYND11/BS69 (via MYND-type zinc finger); this interaction inhibits E1A mediated transactivation. Interacts with host EP300; this interaction stimulates the acetylation of RB1 by recruiting EP300 and RB1 into a multimeric-protein complex. Interacts with host CTBP1 and CTBP2; this interaction seems to potentiate viral replication. Interacts with host DCAF7. Interacts with host DYRK1A. Interacts with host KPNA4; this interaction allows E1A import into the host nucleus. Interacts with host EP400; this interaction stabilizes MYC. Interacts with host TBP protein; this interaction probably disrupts the TBP-TATA complex.

It localises to the host nucleus. Its function is as follows. Plays a role in viral genome replication by driving entry of quiescent cells into the cell cycle. Stimulation of progression from G1 to S phase allows the virus to efficiently use the cellular DNA replicating machinery to achieve viral genome replication. E1A protein has both transforming and trans-activating activities. Induces the disassembly of the E2F1 transcription factor from RB1 by direct competition for the same binding site on RB1, with subsequent transcriptional activation of E2F1-regulated S-phase genes and of the E2 region of the adenoviral genome. Release of E2F1 leads to the ARF-mediated inhibition of MDM2 and causes TP53/p53 to accumulate because it is not targeted for degradation by MDM2-mediated ubiquitination anymore. This increase in TP53, in turn, would arrest the cell proliferation and direct its death but this effect is counteracted by the viral protein E1B-55K. Inactivation of the ability of RB1 to arrest the cell cycle is critical for cellular transformation, uncontrolled cellular growth and proliferation induced by viral infection. Interaction with RBX1 and CUL1 inhibits ubiquitination of the proteins targeted by SCF(FBXW7) ubiquitin ligase complex, and may be linked to unregulated host cell proliferation. The tumorigenesis-restraining activity of E1A may be related to the disruption of the host CtBP-CtIP complex through the CtBP binding motif. This Canine adenovirus serotype 1 (strain RI261) (CAdV-1) protein is Early E1A protein.